Here is a 564-residue protein sequence, read N- to C-terminus: MFS-type efflux transporter ffsH (564 aa).

Basic and acidic residues predominate over residues 1 to 18 (MSEAEKKASQDAQHKEPM). The interval 1–37 (MSEAEKKASQDAQHKEPMADSETQLDSDSAPSSQAEK) is disordered. Over residues 21–35 (SETQLDSDSAPSSQA) the composition is skewed to polar residues. 4 helical membrane-spanning segments follow: residues 43–63 (YPLS…ISAM), 98–118 (YVMI…GGAN), 131–151 (GIGA…LVPM), and 157–177 (FIGL…IIGG). N-linked (GlcNAc...) asparagine glycosylation is present at asparagine 182. Transmembrane regions (helical) follow at residues 187–207 (WVFY…VLFL), 226–246 (VVGN…LTYG), 254–274 (AANI…FIAW), 300–320 (FFIS…YPVY), 334–354 (VHLL…GGLV), 362–382 (PIHM…SVLT), 389–409 (AWAV…STTL), 427–447 (TWAY…AAIF), and 502–522 (VWLV…FEKE). The segment at 540–564 (GDAKGDVERGEGQNDSREGGQNENV) is disordered. The N-linked (GlcNAc...) asparagine glycan is linked to asparagine 553.

This sequence belongs to the major facilitator superfamily.

The protein localises to the cell membrane. Its function is as follows. MFS-type efflux transporter; part of the gene cluster that mediates the biosynthesis of the cytotoxic leucine-containing cytochalasans, including aspochalasin C, aspochalasin E, TMC-169, flavichalasine F, aspergillin PZ, aspochalasin M and flavichalasine G. FfsH might be involved in the excretion of cytochalasans. The chain is MFS-type efflux transporter ffsH from Aspergillus flavipes.